Here is a 172-residue protein sequence, read N- to C-terminus: Lipoprotein signal peptidase (172 aa).

4 consecutive transmembrane segments (helical) span residues 4 to 24, 39 to 59, 69 to 89, and 93 to 113; these read LSSS…LDQV, VAIL…AFSF, WFFT…LAKL, and WTLE…NVID. Residues aspartate 122 and aspartate 140 contribute to the active site. A helical membrane pass occupies residues 136–156; that stretch reads FNVADMGISIGAVLLIISEFW.

Belongs to the peptidase A8 family.

It is found in the cell inner membrane. The enzyme catalyses Release of signal peptides from bacterial membrane prolipoproteins. Hydrolyzes -Xaa-Yaa-Zaa-|-(S,diacylglyceryl)Cys-, in which Xaa is hydrophobic (preferably Leu), and Yaa (Ala or Ser) and Zaa (Gly or Ala) have small, neutral side chains.. The protein operates within protein modification; lipoprotein biosynthesis (signal peptide cleavage). Functionally, this protein specifically catalyzes the removal of signal peptides from prolipoproteins. The chain is Lipoprotein signal peptidase from Hydrogenovibrio crunogenus (strain DSM 25203 / XCL-2) (Thiomicrospira crunogena).